Reading from the N-terminus, the 68-residue chain is Large ribosomal subunit protein bL31 (68 aa).

4 residues coordinate Zn(2+): cysteine 16, cysteine 18, cysteine 36, and cysteine 39.

It belongs to the bacterial ribosomal protein bL31 family. Type A subfamily. As to quaternary structure, part of the 50S ribosomal subunit. The cofactor is Zn(2+).

Functionally, binds the 23S rRNA. This is Large ribosomal subunit protein bL31 from Lachnospira eligens (strain ATCC 27750 / DSM 3376 / VPI C15-48 / C15-B4) (Eubacterium eligens).